Reading from the N-terminus, the 400-residue chain is Acetate kinase (400 aa).

Residue asparagine 10 coordinates Mg(2+). An ATP-binding site is contributed by lysine 17. Residue arginine 91 participates in substrate binding. Aspartate 150 acts as the Proton donor/acceptor in catalysis. ATP-binding positions include 210 to 214, 285 to 287, and 333 to 337; these read HLGNG, DCR, and GIGEN. Position 387 (glutamate 387) interacts with Mg(2+).

It belongs to the acetokinase family. In terms of assembly, homodimer. Mg(2+) is required as a cofactor. It depends on Mn(2+) as a cofactor.

Its subcellular location is the cytoplasm. The enzyme catalyses acetate + ATP = acetyl phosphate + ADP. Its pathway is metabolic intermediate biosynthesis; acetyl-CoA biosynthesis; acetyl-CoA from acetate: step 1/2. Catalyzes the formation of acetyl phosphate from acetate and ATP. Can also catalyze the reverse reaction. This is Acetate kinase from Serratia proteamaculans (strain 568).